Here is a 227-residue protein sequence, read N- to C-terminus: Abasic site processing protein YoaM (227 aa).

C2 functions as the Nucleophile in the catalytic mechanism. At C2 the chain carries Thiazolidine linkage to a ring-opened DNA abasic site. E106 is an active-site residue.

The protein belongs to the SOS response-associated peptidase family.

Formation and reversal of DNA-protein cross-link depends on DNA context. Catalyzes formation of the thiazolidine linkage in presence of abasic sites in single-stranded DNA. Mediates the reversal of the thiazolidine cross-link in presence of double stranded DNA. In terms of biological role, sensor of abasic sites in single-stranded DNA (ssDNA) required to preserve genome integrity by promoting error-free repair of abasic sites. Recognizes and binds abasic sites in ssDNA at replication forks and chemically modifies the lesion by forming a covalent cross-link with DNA: forms a stable thiazolidine linkage between a ring-opened abasic site and the alpha-amino and sulfhydryl substituents of its N-terminal catalytic cysteine residue. The DNA-protein cross-link is then reversed: able to catalyze the reversal of the thiazolidine cross-link and cycle between a cross-link and a non-cross-linked state depending on DNA context: mediates self-reversal of the thiazolidine cross-link in double stranded DNA. May act as a protease: mediates autocatalytic processing of its N-terminal methionine in order to expose the catalytic cysteine. In Bacillus subtilis (strain 168), this protein is Abasic site processing protein YoaM (yoaM).